Consider the following 90-residue polypeptide: Protein RL8A (90 aa).

The helical transmembrane segment at 15 to 34 threads the bilayer; the sequence is WTCEGLLLLLGLLVLFFHHH. A disordered region spans residues 55–90; it reads HESGWYSSDDDGDRDGDEETGESHNRNSVGLSAVFS. Over residues 62-74 the composition is skewed to acidic residues; it reads SDDDGDRDGDEET. Polar residues predominate over residues 80–90; the sequence is RNSVGLSAVFS.

The protein localises to the host membrane. This is Protein RL8A (RL8A) from Homo sapiens (Human).